A 339-amino-acid polypeptide reads, in one-letter code: Fructose-1,6-bisphosphatase isozyme 2 (339 aa).

The important for interaction with ALDOA stretch occupies residues 3-10 (DRSPFETD). AMP is bound by residues Val18 and 28-32 (TGELT). Mg(2+) is bound by residues Asp69 and Glu98. 113-114 (KY) lines the AMP pocket. The Mg(2+) site is built by Asp119, Leu121, and Asp122. Asp122 lines the substrate pocket. Residue Arg141 coordinates AMP. The short motif at 204 to 208 (KKKGK) is the Nuclear localization signal element. 213-216 (NEGY) contributes to the substrate binding site. Phosphotyrosine is present on residues Tyr216 and Tyr219. Residues 245–249 (YVGSM), Tyr265, and Lys275 each bind substrate. Position 281 (Glu281) interacts with Mg(2+).

Belongs to the FBPase class 1 family. Homotetramer. Interacts with ALDOA; the interaction blocks inhibition by physiological concentrations of AMP and reduces inhibition by Ca(2+). Interacts with alpha-actinin and F-actin. It depends on Mg(2+) as a cofactor.

It is found in the cell junction. Its subcellular location is the cytoplasm. The protein localises to the nucleus. The protein resides in the myofibril. It localises to the sarcomere. It is found in the z line. It carries out the reaction beta-D-fructose 1,6-bisphosphate + H2O = beta-D-fructose 6-phosphate + phosphate. Its pathway is carbohydrate biosynthesis; gluconeogenesis. With respect to regulation, subject to complex allosteric regulation. The enzyme can assume an active R-state, or an inactive T-state. Intermediate conformations may exist. AMP acts as an allosteric inhibitor. Fructose 2,6-bisphosphate acts as a competitive inhibitor. Strongly inhibited by Ca(2+). Its function is as follows. Catalyzes the hydrolysis of fructose 1,6-bisphosphate to fructose 6-phosphate in the presence of divalent cations and probably participates in glycogen synthesis from carbohydrate precursors, such as lactate. This chain is Fructose-1,6-bisphosphatase isozyme 2 (FBP2), found in Oryctolagus cuniculus (Rabbit).